The primary structure comprises 287 residues: tRNA pseudouridine synthase B (287 aa).

Asp38 functions as the Nucleophile in the catalytic mechanism.

It belongs to the pseudouridine synthase TruB family. Type 1 subfamily.

The enzyme catalyses uridine(55) in tRNA = pseudouridine(55) in tRNA. Functionally, responsible for synthesis of pseudouridine from uracil-55 in the psi GC loop of transfer RNAs. This Aquifex aeolicus (strain VF5) protein is tRNA pseudouridine synthase B.